We begin with the raw amino-acid sequence, 364 residues long: UDP-arabinopyranose mutase 1 (364 aa).

Positions Asp110–Asp112 match the DXD motif motif. Arg158 carries an N-linked (Glc...) arginine glycan.

This sequence belongs to the RGP family. Heteromers with UAM2 and UAM3. Mn(2+) is required as a cofactor. Requires Mg(2+) as cofactor. In terms of processing, reversibly glycosylated in vitro at Arg-158 by UDP-glucose. Reversibly glycosylated by UDP-xylose and UDP-galactose.

It is found in the golgi apparatus. It carries out the reaction UDP-beta-L-arabinofuranose = UDP-beta-L-arabinopyranose. UDP-L-arabinose mutase involved in the biosynthesis of cell wall non-cellulosic polysaccharides. Catalyzes the interconvertion of UDP-L-arabinopyranose (UDP-Arap) and UDP-L-arabinofuranose (UDP-Araf). Preferentially catalyzes the formation of UDP-Arap from UDP-Araf. At thermodynamic equilibrium in vitro the ratio of the pyranose form over the furanose form is 90:10. Is probably active as heteromer in vivo. This chain is UDP-arabinopyranose mutase 1, found in Oryza sativa subsp. japonica (Rice).